We begin with the raw amino-acid sequence, 415 residues long: Peptide chain release factor subunit 1 (415 aa).

This sequence belongs to the eukaryotic release factor 1 family. In terms of assembly, heterodimer of two subunits, one of which binds GTP.

The protein localises to the cytoplasm. Functionally, directs the termination of nascent peptide synthesis (translation) in response to the termination codons UAA, UAG and UGA. The protein is Peptide chain release factor subunit 1 of Thermococcus kodakarensis (strain ATCC BAA-918 / JCM 12380 / KOD1) (Pyrococcus kodakaraensis (strain KOD1)).